The following is a 632-amino-acid chain: Biosynthetic arginine decarboxylase (632 aa).

K101 bears the N6-(pyridoxal phosphate)lysine mark. Residue 281–291 (FDVGGGLGVDY) participates in substrate binding.

It belongs to the Orn/Lys/Arg decarboxylase class-II family. SpeA subfamily. The cofactor is Mg(2+). Pyridoxal 5'-phosphate is required as a cofactor.

The catalysed reaction is L-arginine + H(+) = agmatine + CO2. It participates in amine and polyamine biosynthesis; agmatine biosynthesis; agmatine from L-arginine: step 1/1. In terms of biological role, catalyzes the biosynthesis of agmatine from arginine. The chain is Biosynthetic arginine decarboxylase from Escherichia coli O157:H7 (strain EC4115 / EHEC).